Consider the following 142-residue polypeptide: Small heat shock protein IbpB (142 aa).

The sHSP domain maps to Thr26 to Arg137.

This sequence belongs to the small heat shock protein (HSP20) family. Homodimer. Forms homomultimers of about 100-150 subunits at optimal growth temperatures. Conformation changes to oligomers at high temperatures or high ionic concentrations. The decrease in size of the multimers is accompanied by an increase in chaperone activity.

Its subcellular location is the cytoplasm. In terms of biological role, associates with aggregated proteins, together with IbpA, to stabilize and protect them from irreversible denaturation and extensive proteolysis during heat shock and oxidative stress. Aggregated proteins bound to the IbpAB complex are more efficiently refolded and reactivated by the ATP-dependent chaperone systems ClpB and DnaK/DnaJ/GrpE. Its activity is ATP-independent. This Citrobacter koseri (strain ATCC BAA-895 / CDC 4225-83 / SGSC4696) protein is Small heat shock protein IbpB.